A 159-amino-acid chain; its full sequence is Ribosomal RNA large subunit methyltransferase H (159 aa).

Residues Leu76, Gly108, and 127–132 (LSKMTF) each bind S-adenosyl-L-methionine.

This sequence belongs to the RNA methyltransferase RlmH family. As to quaternary structure, homodimer.

It localises to the cytoplasm. It carries out the reaction pseudouridine(1915) in 23S rRNA + S-adenosyl-L-methionine = N(3)-methylpseudouridine(1915) in 23S rRNA + S-adenosyl-L-homocysteine + H(+). Its function is as follows. Specifically methylates the pseudouridine at position 1915 (m3Psi1915) in 23S rRNA. This is Ribosomal RNA large subunit methyltransferase H from Ureaplasma urealyticum serovar 10 (strain ATCC 33699 / Western).